Reading from the N-terminus, the 351-residue chain is Methylthioribose-1-phosphate isomerase (351 aa).

Residues 51–53, R94, and Q199 each bind substrate; that span reads RGA. D240 (proton donor) is an active-site residue. A substrate-binding site is contributed by 250 to 251; that stretch reads NK.

Belongs to the EIF-2B alpha/beta/delta subunits family. MtnA subfamily. In terms of assembly, homodimer.

The enzyme catalyses 5-(methylsulfanyl)-alpha-D-ribose 1-phosphate = 5-(methylsulfanyl)-D-ribulose 1-phosphate. It functions in the pathway amino-acid biosynthesis; L-methionine biosynthesis via salvage pathway; L-methionine from S-methyl-5-thio-alpha-D-ribose 1-phosphate: step 1/6. In terms of biological role, catalyzes the interconversion of methylthioribose-1-phosphate (MTR-1-P) into methylthioribulose-1-phosphate (MTRu-1-P). The protein is Methylthioribose-1-phosphate isomerase of Bacillus anthracis.